Consider the following 1929-residue polypeptide: Myoferlin (1929 aa).

Residues 1 to 53 form a disordered region; that stretch reads MISYEPPPSAISNPTDPGGTTIIQGDGENDEEEDRDIVDAGFNPSVPGAPGQT. Over residues 27 to 36 the composition is skewed to acidic residues; that stretch reads GENDEEEDRD. C2 domains lie at 62–179 and 218–354; these read VKGK…RKWV and EDDD…EEYD. Residues Asp-267, Asp-275, Asp-323, Asp-325, and Asp-331 each contribute to the Ca(2+) site. The segment covering 898 to 907 has biased composition (basic residues); it reads RRLVRKRKKD. Residues 898–918 form a disordered region; it reads RRLVRKRKKDPKVSTTSKAAL. C2 domains follow at residues 996-1124, 1159-1283, 1408-1527, and 1645-1793; these read GANT…LLWY, RAPQ…TKHE, IPYP…SHCG, and GPPG…EKCS. 4 residues coordinate Ca(2+): Asp-1028, Asp-1034, Asp-1090, and Asp-1092. The Ca(2+) site is built by Asp-1442, Asp-1448, Asp-1497, Asp-1499, Asp-1764, Ser-1767, and Asp-1770. Over residues 1845 to 1858 the composition is skewed to basic and acidic residues; sequence DAEERPAGKGRDEP. Residues 1845–1867 form a disordered region; that stretch reads DAEERPAGKGRDEPNMNPKLDPP. A helical membrane pass occupies residues 1894 to 1914; it reads WVFIGLIILLLVLLFLGVFFY.

It belongs to the ferlin family. Ca(2+) serves as cofactor.

The protein resides in the cell membrane. Its subcellular location is the nucleus membrane. It localises to the cytoplasmic vesicle membrane. Functionally, may play a role in membrane regeneration and repair. This Xenopus tropicalis (Western clawed frog) protein is Myoferlin (myof).